Consider the following 524-residue polypeptide: Probable glutamyl-tRNA reductase 3, chloroplastic (524 aa).

The transit peptide at 1-52 (MAVSNASVVLSPNLETSSSWYHHNPSSSLDLIRIHTLPMNKMTRRGLIQRVR) directs the protein to the chloroplast. Substrate is bound by residues 129–132 (TCNR), Ser189, 194–196 (ENQ), and Gln200. The Nucleophile role is filled by Cys130. 269–274 (GAGEMG) is a binding site for NADP(+).

This sequence belongs to the glutamyl-tRNA reductase family.

The protein resides in the plastid. The protein localises to the chloroplast. It catalyses the reaction (S)-4-amino-5-oxopentanoate + tRNA(Glu) + NADP(+) = L-glutamyl-tRNA(Glu) + NADPH + H(+). It functions in the pathway porphyrin-containing compound metabolism; protoporphyrin-IX biosynthesis; 5-aminolevulinate from L-glutamyl-tRNA(Glu): step 1/2. Its pathway is porphyrin-containing compound metabolism; chlorophyll biosynthesis. Catalyzes the NADPH-dependent reduction of glutamyl-tRNA(Glu) to glutamate 1-semialdehyde (GSA). This chain is Probable glutamyl-tRNA reductase 3, chloroplastic (HEMA3), found in Arabidopsis thaliana (Mouse-ear cress).